Consider the following 141-residue polypeptide: Large ribosomal subunit protein uL11B (141 aa).

Belongs to the universal ribosomal protein uL11 family. As to quaternary structure, part of the ribosomal stalk of the 50S ribosomal subunit. Interacts with L10 and the large rRNA to form the base of the stalk. L10 forms an elongated spine to which L12 dimers bind in a sequential fashion forming a multimeric L10(L12)X complex. One or more lysine residues are methylated.

Functionally, forms part of the ribosomal stalk which helps the ribosome interact with GTP-bound translation factors. The polypeptide is Large ribosomal subunit protein uL11B (Halalkalibacterium halodurans (strain ATCC BAA-125 / DSM 18197 / FERM 7344 / JCM 9153 / C-125) (Bacillus halodurans)).